A 227-amino-acid polypeptide reads, in one-letter code: GRF-interacting factor 1 (227 aa).

The disordered stretch occupies residues 186-227; it reads RSGSGAKEGSTSLSVDVRGGTSSGAQSGDGEYLKVGTEEEGS.

The protein belongs to the SS18 family. In terms of assembly, interacts with several GRFs. Interacts with GRF10. Interacts with GRF1. In terms of tissue distribution, expressed in shoots, aerial roots, ears and tassels. Expressed in the shoot apical meristem (SAM), young leaf primordia, leaf margins, inflorescence meristem, floral meristem and spikelet meristem.

Transcription coactivator that plays a role in the regulation of meristematic function in leaves, stems and inflorescences. Regulates shoot architecture and meristem determinacy. Binds to the inflorescence architecture gene UB3 (unbranched3). Regulates the expression of several genes involved in inflorescence architecture. Component of a network formed by the microRNA396 (miRNA396), the GRFs and their interacting factors (GIFs) acting in the regulation of meristem function, at least partially through the control of cell proliferation. Associates with the core SWI/SNF chromatin-remodeling complex and specific GRFs to tightly regulate the transition between cell division and cell expansion in growing leaves. The protein is GRF-interacting factor 1 of Zea mays (Maize).